Consider the following 585-residue polypeptide: Glutathione S-transferase C-terminal domain-containing protein homolog (585 aa).

The GST C-terminal domain occupies 120–275 (LGFKGSCLLA…DKCARVLRDL (156 aa)).

This sequence belongs to the GSTCD family.

The sequence is that of Glutathione S-transferase C-terminal domain-containing protein homolog from Drosophila melanogaster (Fruit fly).